The chain runs to 962 residues: Translation initiation factor IF-2 (962 aa).

Positions 101–366 (AAQTQAAPVR…KKGKKLKLEP (266 aa)) are disordered. Residues 117–141 (DAAKARAEAATRAEARAKAEAEAAK) show a composition bias toward basic and acidic residues. Over residues 145-157 (AKAGNKAKPAAQK) the composition is skewed to low complexity. Residues 173-216 (KPAEESKAEKAQADKMPSKKPAEPKEKAAKPKHERNGKGKDAKK) show a composition bias toward basic and acidic residues. Residues 219–234 (KPAAPAVPQPVVSAEE) are compositionally biased toward low complexity. The span at 235–269 (QAQRDEEARRAAALRAHQEALLKEKQERQARREAM) shows a compositional bias: basic and acidic residues. A compositionally biased stretch (low complexity) spans 270 to 283 (KQQAEQQAKAAQEA). The span at 338–354 (GGRDRNNARNGDDERVR) shows a compositional bias: basic and acidic residues. The 170-residue stretch at 462-631 (PRPPVVTVMG…LLEAEVLELT (170 aa)) folds into the tr-type G domain. A G1 region spans residues 471–478 (GHVDHGKT). A GTP-binding site is contributed by 471–478 (GHVDHGKT). A G2 region spans residues 496 to 500 (GITQH). Positions 517–520 (DTPG) are G3. GTP-binding positions include 517 to 521 (DTPGH) and 571 to 574 (NKID). Residues 571-574 (NKID) are G4. Residues 607 to 609 (SAK) are G5.

The protein belongs to the TRAFAC class translation factor GTPase superfamily. Classic translation factor GTPase family. IF-2 subfamily.

Its subcellular location is the cytoplasm. Functionally, one of the essential components for the initiation of protein synthesis. Protects formylmethionyl-tRNA from spontaneous hydrolysis and promotes its binding to the 30S ribosomal subunits. Also involved in the hydrolysis of GTP during the formation of the 70S ribosomal complex. The sequence is that of Translation initiation factor IF-2 from Neisseria meningitidis serogroup A / serotype 4A (strain DSM 15465 / Z2491).